A 509-amino-acid polypeptide reads, in one-letter code: Protein MAIN-LIKE 1 (509 aa).

Positions 477-509 (GYGKRRRRNEHTPTPNNGGGNDISSLLLQKEDS) are disordered. Over residues 488-503 (TPTPNNGGGNDISSLL) the composition is skewed to polar residues.

As to expression, expressed in root tips, the shoot apical meristem (SAM), leaves, mature flowers and embryos.

The protein localises to the nucleus. Acts as an important factor for cell fate determination and maintenance throughout plant development. Required for the organization of the root apical meristem (RAM) and the shoot apical meristem (SAM). Required to maintain genome stability and cell division activity in meristematic cells. In Arabidopsis thaliana (Mouse-ear cress), this protein is Protein MAIN-LIKE 1.